Reading from the N-terminus, the 386-residue chain is Ribonucleoside-diphosphate reductase subunit M2 (386 aa).

Ser20 carries the post-translational modification Phosphoserine. The residue at position 33 (Thr33) is a Phosphothreonine. The Cy signature appears at 49-51 (RRI). 3 residues coordinate Fe cation: Asp139, Glu170, and His173. The active site involves Tyr177. Fe cation contacts are provided by Glu233, Glu267, and His270.

Belongs to the ribonucleoside diphosphate reductase small chain family. Heterodimer of a large and a small subunit. Interacts (via Cy motif and when phosphorylated at Thr-33) with CCNF; the interaction occurs exclusively in G2 and early M. It depends on Fe cation as a cofactor. Post-translationally, phosphorylation on Ser-20 relieves the inhibitory effect on Wnt signaling. Phosphorylated on Thr-33 by CDK1 and CDK2; predominantly in G2 and M phase. In terms of processing, ubiquitinated by the SCF(CCNF) E3 ubiquitin-protein ligase complex; leading to its degradation by the proteasome.

It is found in the cytoplasm. It localises to the nucleus. The catalysed reaction is a 2'-deoxyribonucleoside 5'-diphosphate + [thioredoxin]-disulfide + H2O = a ribonucleoside 5'-diphosphate + [thioredoxin]-dithiol. In terms of biological role, provides the precursors necessary for DNA synthesis. Catalyzes the biosynthesis of deoxyribonucleotides from the corresponding ribonucleotides. Inhibits Wnt signaling. This Mesocricetus auratus (Golden hamster) protein is Ribonucleoside-diphosphate reductase subunit M2 (RRM2).